A 318-amino-acid chain; its full sequence is Methenyltetrahydromethanopterin cyclohydrolase (318 aa).

Belongs to the MCH family.

The protein localises to the cytoplasm. It carries out the reaction 5,10-methenyl-5,6,7,8-tetrahydromethanopterin + H2O = N(5)-formyl-5,6,7,8-tetrahydromethanopterin + H(+). It participates in one-carbon metabolism; methanogenesis from CO(2); 5,10-methenyl-5,6,7,8-tetrahydromethanopterin from CO(2): step 3/3. In terms of biological role, catalyzes the reversible interconversion of 5-formyl-H(4)MPT to methenyl-H(4)MPT(+). The chain is Methenyltetrahydromethanopterin cyclohydrolase from Methanocella arvoryzae (strain DSM 22066 / NBRC 105507 / MRE50).